The sequence spans 433 residues: GTPase Obg (433 aa).

The region spanning 2 to 160 is the Obg domain; the sequence is PTFVDQTKIE…RVLRLELKLL (159 aa). The region spanning 161-334 is the OBG-type G domain; that stretch reads ADVGLVGFPS…LMNDTATLVE (174 aa). GTP contacts are provided by residues 167–174, 192–196, 214–217, 284–287, and 315–317; these read GFPSVGKS, FTTLT, DLPG, SQMD, and SSV. The Mg(2+) site is built by serine 174 and threonine 194. An OCT domain is found at 355–433; that stretch reads YKAPQRNEFM…IGKFVFEFVQ (79 aa).

Belongs to the TRAFAC class OBG-HflX-like GTPase superfamily. OBG GTPase family. In terms of assembly, monomer. Mg(2+) is required as a cofactor.

The protein localises to the cytoplasm. An essential GTPase which binds GTP, GDP and possibly (p)ppGpp with moderate affinity, with high nucleotide exchange rates and a fairly low GTP hydrolysis rate. Plays a role in control of the cell cycle, stress response, ribosome biogenesis and in those bacteria that undergo differentiation, in morphogenesis control. This chain is GTPase Obg, found in Lactobacillus acidophilus (strain ATCC 700396 / NCK56 / N2 / NCFM).